The following is a 1384-amino-acid chain: DNA-directed RNA polymerase subunit beta (1384 aa).

The protein belongs to the RNA polymerase beta chain family. The RNAP catalytic core consists of 2 alpha, 1 beta, 1 beta' and 1 omega subunit. When a sigma factor is associated with the core the holoenzyme is formed, which can initiate transcription.

The enzyme catalyses RNA(n) + a ribonucleoside 5'-triphosphate = RNA(n+1) + diphosphate. DNA-dependent RNA polymerase catalyzes the transcription of DNA into RNA using the four ribonucleoside triphosphates as substrates. This Xylella fastidiosa (strain M12) protein is DNA-directed RNA polymerase subunit beta.